We begin with the raw amino-acid sequence, 179 residues long: Orotate phosphoribosyltransferase (179 aa).

Residues Arg-24, Arg-89, Lys-90, Lys-93, and 115 to 123 each bind 5-phospho-alpha-D-ribose 1-diphosphate; that span reads EDVITTGGA. Residues Thr-119 and Arg-147 each contribute to the orotate site.

The protein belongs to the purine/pyrimidine phosphoribosyltransferase family. PyrE subfamily. In terms of assembly, homodimer. The cofactor is Mg(2+).

It catalyses the reaction orotidine 5'-phosphate + diphosphate = orotate + 5-phospho-alpha-D-ribose 1-diphosphate. It functions in the pathway pyrimidine metabolism; UMP biosynthesis via de novo pathway; UMP from orotate: step 1/2. Catalyzes the transfer of a ribosyl phosphate group from 5-phosphoribose 1-diphosphate to orotate, leading to the formation of orotidine monophosphate (OMP). The polypeptide is Orotate phosphoribosyltransferase (Nocardioides sp. (strain ATCC BAA-499 / JS614)).